Consider the following 270-residue polypeptide: MSMQDHDRTEQGMTSLAVTRHLDGSSRPDWDRVAEETPVALVFNGISHAVMMATPLDLEWLAVGFALSEGIVARRAEIFDIESDFVCGGAEVRLEIAQPAFLALKDRRRSLAGRTGCGVCGIESLAMLDLSPEPIAGPAGPVSADPAAIARAAAELPAHQRLMQATGCAHAAAWCGRDGGVRMAFEDVGRHNALDKLIGWLALEGMDPADGFVFMSSRASYELARKCARTGIPLLATISAPTSLAVDIARRAGVALASFCRRTGFVEYTA.

Basic and acidic residues-rich tracts occupy residues 1-10 (MSMQDHDRTE) and 20-30 (RHLDGSSRPDW). Residues 1 to 30 (MSMQDHDRTEQGMTSLAVTRHLDGSSRPDW) form a disordered region. Catalysis depends on Cys-117, which acts as the Cysteine persulfide intermediate.

The protein belongs to the FdhD family.

The protein localises to the cytoplasm. In terms of biological role, required for formate dehydrogenase (FDH) activity. Acts as a sulfur carrier protein that transfers sulfur from IscS to the molybdenum cofactor prior to its insertion into FDH. The polypeptide is Sulfur carrier protein FdhD (Chromobacterium violaceum (strain ATCC 12472 / DSM 30191 / JCM 1249 / CCUG 213 / NBRC 12614 / NCIMB 9131 / NCTC 9757 / MK)).